The primary structure comprises 709 residues: Transcriptional factor SWI5 (709 aa).

Serine 225 is subject to Phosphoserine. The segment covering 245 to 264 (LSPMISPPMSNTSFTGSPSR) has biased composition (polar residues). Residues 245–267 (LSPMISPPMSNTSFTGSPSRRNN) form a disordered region. 2 positions are modified to phosphoserine: serine 278 and serine 300. Threonine 339 carries the phosphothreonine modification. Serine 376 carries the phosphoserine modification. Residues 443–483 (LKPPSQQARHREGVFNDLDPNVLTKNTDNEGDDNEENEPES) are disordered. Acidic residues predominate over residues 471 to 480 (NEGDDNEENE). Phosphoserine is present on residues serine 488, serine 492, and serine 505. Residue serine 522 is modified to Phosphoserine; by CDC28. C2H2-type zinc fingers lie at residues 550-574 (FECL…IQTH), 580-604 (YSCD…KKSH), and 609-632 (YACP…RMIC). Residues 635–659 (GKKYENVVIKRSPRKRGRPRKDGTS) carry the Nuclear localization signal motif. Residues 644–677 (KRSPRKRGRPRKDGTSSVSSSPIKENINKDHNGQ) are disordered. Serine 646 is modified (phosphoserine; by CDC28). The segment at residues 647 to 659 (PRKRGRPRKDGTS) is a DNA-binding region (a.T hook). Serine 664 is subject to Phosphoserine; by CDC28.

Post-translationally, cell cycle-dependent phosphorylation of three serine residues prevents SWI5 from entering the nucleus, and it accumulates in the cytoplasm. As a consequence of CDC28 kinase inactivation at the end of anaphase, the three serine residues are dephosphorylated and SWI5 enters the nucleus to activate transcription. It is then rapidly degraded. Threonine phosphorylation also seems to occur. In terms of processing, phosphorylated by PHO85.

The protein resides in the nucleus. It localises to the cytoplasm. In terms of biological role, determines the mother-cell-specific transcription of the HO endonuclease gene that is responsible for the initiation of mating-type switching in yeast. Recognizes a specific sequence in the promoter of the HO gene. Activates EGT2 transcription in a concentration-dependent manner. Synthesized during G2 and early mitosis. The chain is Transcriptional factor SWI5 (SWI5) from Saccharomyces cerevisiae (strain ATCC 204508 / S288c) (Baker's yeast).